We begin with the raw amino-acid sequence, 236 residues long: tRNA (guanine-N(7)-)-methyltransferase (236 aa).

S-adenosyl-L-methionine-binding positions include G54, 77–78 (EI), 110–111 (NA), and L130. Residue D133 is part of the active site. 208-210 (TEE) contributes to the S-adenosyl-L-methionine binding site.

The protein belongs to the class I-like SAM-binding methyltransferase superfamily. TrmB family.

It is found in the nucleus. The enzyme catalyses guanosine(46) in tRNA + S-adenosyl-L-methionine = N(7)-methylguanosine(46) in tRNA + S-adenosyl-L-homocysteine. It participates in tRNA modification; N(7)-methylguanine-tRNA biosynthesis. Its function is as follows. Catalyzes the formation of N(7)-methylguanine at position 46 (m7G46) in tRNA. The sequence is that of tRNA (guanine-N(7)-)-methyltransferase from Bombyx mori (Silk moth).